The sequence spans 254 residues: 3-deoxy-manno-octulosonate cytidylyltransferase (254 aa).

It belongs to the KdsB family.

The protein localises to the cytoplasm. The catalysed reaction is 3-deoxy-alpha-D-manno-oct-2-ulosonate + CTP = CMP-3-deoxy-beta-D-manno-octulosonate + diphosphate. The protein operates within nucleotide-sugar biosynthesis; CMP-3-deoxy-D-manno-octulosonate biosynthesis; CMP-3-deoxy-D-manno-octulosonate from 3-deoxy-D-manno-octulosonate and CTP: step 1/1. Its pathway is bacterial outer membrane biogenesis; lipopolysaccharide biosynthesis. In terms of biological role, activates KDO (a required 8-carbon sugar) for incorporation into bacterial lipopolysaccharide in Gram-negative bacteria. The protein is 3-deoxy-manno-octulosonate cytidylyltransferase of Polynucleobacter necessarius subsp. necessarius (strain STIR1).